The primary structure comprises 274 residues: Purine nucleoside phosphorylase YlmD (274 aa).

Residue 46 to 47 (LH) participates in inosine binding. Histidine 80, cysteine 125, histidine 142, cysteine 182, cysteine 183, cysteine 242, and cysteine 245 together coordinate Zn(2+). Arginine 262 contacts inosine.

It belongs to the purine nucleoside phosphorylase YfiH/LACC1 family. It depends on Zn(2+) as a cofactor.

It carries out the reaction adenosine + phosphate = alpha-D-ribose 1-phosphate + adenine. The enzyme catalyses S-methyl-5'-thioadenosine + phosphate = 5-(methylsulfanyl)-alpha-D-ribose 1-phosphate + adenine. The catalysed reaction is inosine + phosphate = alpha-D-ribose 1-phosphate + hypoxanthine. It catalyses the reaction adenosine + H2O + H(+) = inosine + NH4(+). Functionally, purine nucleoside enzyme that catalyzes the phosphorolysis of adenosine and inosine nucleosides, yielding D-ribose 1-phosphate and the respective free bases, adenine and hypoxanthine. Also catalyzes the phosphorolysis of S-methyl-5'-thioadenosine into adenine and S-methyl-5-thio-alpha-D-ribose 1-phosphate. Also has adenosine deaminase activity. This Geobacillus stearothermophilus (strain DSM 13240 / CIP 106956 / 10) protein is Purine nucleoside phosphorylase YlmD.